A 490-amino-acid chain; its full sequence is MNISTIVSNLKDLILEVRAPYDLEITGVSNHSSKVKKGDLFICRRGEKFDSHEIIPEVMEKGAVAVVVEREIDLDFPYIQVFDSRYFEAKVASLFFEDPWKDVLTFGVTGTNGKTTTTMMIYHMLTSLGERGSVLTTAVKRILGNSYYDDITTPDAITILSAMKENREGGGKFFALEVSSHALVQQRVEGVRFDVGIFTNISRDHLDFHGTFENYLKAKLHLFDLLKDDGVAVLNESLADAFNRKSRKITFGTSKNADYRLGNIEVSWEGTQFVLETPDGLLKVFTRAIGDFNAYNAAAAIAALHQLGYDPKDLASSLETFTGVEGRFEVVRGAKKIGLNVVVDFAHSPDALEKLLKNVRKISQGRVIVVFGAGGNSDRGKRPMMSEVASKLADVVILTTDDPRGEDPEQIMEDLIKGIDKRKPYLVLFDRREAIETALTIANRGDSVVIAGRGHERYQIIDEEKKVPFQDREVVEEIIRDKLKGRKYAQ.

UDP-N-acetyl-alpha-D-muramoyl-L-alanyl-D-glutamate is bound at residue serine 32. Position 110 to 116 (glycine 110 to threonine 116) interacts with ATP. UDP-N-acetyl-alpha-D-muramoyl-L-alanyl-D-glutamate is bound by residues threonine 152–threonine 153, serine 179, glutamine 185, and arginine 187. Residue lysine 219 is modified to N6-carboxylysine.

The protein belongs to the MurCDEF family. MurE subfamily. Carboxylation is probably crucial for Mg(2+) binding and, consequently, for the gamma-phosphate positioning of ATP.

It is found in the cytoplasm. It catalyses the reaction UDP-N-acetyl-alpha-D-muramoyl-L-alanyl-D-glutamate + L-lysine + ATP = UDP-N-acetyl-alpha-D-muramoyl-L-alanyl-gamma-D-glutamyl-L-lysine + ADP + phosphate + H(+). It carries out the reaction UDP-N-acetyl-alpha-D-muramoyl-L-alanyl-D-glutamate + D-lysine + ATP = N(6)-(UDP-N-acetyl-alpha-D-muramoyl-L-alanyl-gamma-D-glutamyl)-D-lysine + ADP + phosphate + H(+). The protein operates within cell wall biogenesis; peptidoglycan biosynthesis. Functionally, catalyzes the addition of both L- and D-lysine to the nucleotide precursor UDP-N-acetylmuramoyl-L-alanyl-D-glutamate (UMAG) in the biosynthesis of bacterial cell-wall peptidoglycan. Is also able to use meso-diaminopimelate as the amino acid substrate in vitro, although much less efficiently. The chain is UDP-N-acetylmuramoyl-L-alanyl-D-glutamate--LD-lysine ligase (murE) from Thermotoga maritima (strain ATCC 43589 / DSM 3109 / JCM 10099 / NBRC 100826 / MSB8).